The chain runs to 142 residues: Large ribosomal subunit protein uL13 (142 aa).

It belongs to the universal ribosomal protein uL13 family. As to quaternary structure, part of the 50S ribosomal subunit.

This protein is one of the early assembly proteins of the 50S ribosomal subunit, although it is not seen to bind rRNA by itself. It is important during the early stages of 50S assembly. In Helicobacter hepaticus (strain ATCC 51449 / 3B1), this protein is Large ribosomal subunit protein uL13.